The sequence spans 350 residues: Phosphoribosylformylglycinamidine cyclo-ligase (350 aa).

This sequence belongs to the AIR synthase family.

It is found in the cytoplasm. The enzyme catalyses 2-formamido-N(1)-(5-O-phospho-beta-D-ribosyl)acetamidine + ATP = 5-amino-1-(5-phospho-beta-D-ribosyl)imidazole + ADP + phosphate + H(+). It participates in purine metabolism; IMP biosynthesis via de novo pathway; 5-amino-1-(5-phospho-D-ribosyl)imidazole from N(2)-formyl-N(1)-(5-phospho-D-ribosyl)glycinamide: step 2/2. In Cupriavidus necator (strain ATCC 17699 / DSM 428 / KCTC 22496 / NCIMB 10442 / H16 / Stanier 337) (Ralstonia eutropha), this protein is Phosphoribosylformylglycinamidine cyclo-ligase.